The primary structure comprises 685 residues: Putative mannosyltransferase YycA (685 aa).

6 consecutive transmembrane segments (helical) span residues 6-26, 68-88, 109-129, 154-174, 176-196, and 204-224; these read FDAA…YHIW, VLWI…SVII, FGVG…IAVA, AVKQ…GLAF, MKMM…LIAS, and IGSL…WAIA. A disordered region spans residues 269 to 347; the sequence is MNAAGGGNMQ…GGGGGKSVNM (79 aa). The span at 277–286 shows a compositional bias: polar residues; the sequence is MQNQDNMQAP. Residues 287 to 303 show a composition bias toward low complexity; that stretch reads NGNGSSFSQNGNQSFGN. The segment covering 318–343 has biased composition (gly residues); that stretch reads LNGGGGTPPTGGNGPGNGGPGGGGGK. 7 helical membrane-spanning segments follow: residues 363 to 383, 399 to 419, 422 to 442, 455 to 475, 479 to 499, 513 to 533, and 573 to 593; these read LSGQ…GAII, TLFW…AGFF, YYLI…WYTM, YLLP…LSAY, IGSV…LALL, IISL…PLLY, and TGEE…YIIY. Residues 652–685 are disordered; it reads TSDEYSGSSSSTNSVQGMRRGPGGESQQTLYLVE. Residues 654–665 show a composition bias toward low complexity; that stretch reads DEYSGSSSSTNS. Polar residues predominate over residues 676 to 685; sequence ESQQTLYLVE.

Belongs to the glycosyltransferase 39 family.

The protein localises to the cell membrane. In Bacillus subtilis (strain 168), this protein is Putative mannosyltransferase YycA (yycA).